Here is a 265-residue protein sequence, read N- to C-terminus: Orphan methyltransferase M.BamHII (265 aa).

The protein belongs to the N(4)/N(6)-methyltransferase family. N(4) subfamily.

The catalysed reaction is a 2'-deoxycytidine in DNA + S-adenosyl-L-methionine = an N(4)-methyl-2'-deoxycytidine in DNA + S-adenosyl-L-homocysteine + H(+). Functionally, a beta subtype methylase, recognizes the double-stranded sequence 5'-GGATCC-3', methylates C-? on both strands. No endonuclease has been identified for this methylase, although it is speculated it might protect against BamHI. This chain is Orphan methyltransferase M.BamHII (bamHIIM), found in Bacillus amyloliquefaciens (Bacillus velezensis).